The following is a 1052-amino-acid chain: Calmin (1052 aa).

The interval 1 to 288 (MAAQEWDWFQ…IVTYVAQFLE (288 aa)) is actin-binding. One can recognise a Calponin-homology (CH) 1 domain in the interval 32–139 (NVQKRTFTRW…LIWNIILFFQ (108 aa)). A compositionally biased stretch (low complexity) spans 148–168 (SRSSPSSSLSPGSGGTDSDSS). Positions 148-178 (SRSSPSSSLSPGSGGTDSDSSYPPTPTTERS) are disordered. Positions 187–291 (RKAIKTLLSW…YVAQFLERFP (105 aa)) constitute a Calponin-homology (CH) 2 domain. Disordered regions lie at residues 391–420 (STGKTGSIAEPTPESSILSTRKDGRRSNSL), 455–545 (KATK…TLLA), 585–727 (STSQ…SPPL), and 758–929 (GEDL…DSSI). 2 stretches are compositionally biased toward basic and acidic residues: residues 455-465 (KATKELSKQDG) and 472-495 (VSKEKKKSEQEARLVLEAASDKVP). Polar residues predominate over residues 509–529 (AQPSQDSSFCNGTVESPSSQG). S537 is subject to Phosphoserine. 3 stretches are compositionally biased toward basic and acidic residues: residues 594-614 (PSSHEKTRGEEEGSENHAEKP), 622-651 (PRAETEAAESRLEPKKLEPPPKDPEQEDQG), and 659-669 (PADKKPKVYEK). Phosphoserine is present on S679. Position 710 is a phosphothreonine (T710). The span at 711–720 (LRSHSEEGLD) shows a compositional bias: basic and acidic residues. A Phosphoserine modification is found at S724. Over residues 759–773 (EDLKSEDTDLEHPED) the composition is skewed to basic and acidic residues. Positions 780-791 (REEEADEDEEEA) are enriched in acidic residues. The span at 792-801 (QSSQSSCSFS) shows a compositional bias: low complexity. The segment covering 836-849 (SHEDHQPKETKENG) has biased composition (basic and acidic residues). S856 is modified (phosphoserine). Positions 880–889 (SKKKEKRKHM) are enriched in basic residues. Position 925 is a phosphoserine (S925). Residues 1027–1047 (VIYFILFLWLLVYCLLLFPQL) form a helical; Anchor for type IV membrane protein membrane-spanning segment.

Expressed in testis. Expressed during testis maturation process and in maturing spermatids. In brain, it is expressed in neurons of the hippocampus, cerebral cortex, and thalamus, Purkinje cells, and also in the choroid plexus and ependymal cells. Expressed predominantly in dendrites and cell bodies of the neurons, but not in axons. The level of expression increases during the period of maturation of the mouse brain after birth.

The protein resides in the membrane. Its subcellular location is the cytoplasm. This Mus musculus (Mouse) protein is Calmin (Clmn).